The primary structure comprises 90 residues: Small ribosomal subunit protein bS20 (90 aa).

This sequence belongs to the bacterial ribosomal protein bS20 family.

In terms of biological role, binds directly to 16S ribosomal RNA. In Desulfitobacterium hafniense (strain DSM 10664 / DCB-2), this protein is Small ribosomal subunit protein bS20.